The sequence spans 699 residues: Homeobox-leucine zipper protein HDG8 (699 aa).

The interval 1 to 31 is disordered; sequence MDNNGGGSSGNEQYTSGDAKQNGKRTCHRHT. Polar residues predominate over residues 10-19; the sequence is GNEQYTSGDA. The span at 22-31 shows a compositional bias: basic residues; the sequence is NGKRTCHRHT. Residues 23 to 82 constitute a DNA-binding region (homeobox); sequence GKRTCHRHTPQQIQRLEAYFKECPHPDERQRNQLCRELKLEPDQIKFWFQNKRTQSKTQE. Residues 89-149 adopt a coiled-coil conformation; it reads LLRGENETLQ…LKDHRDRISN (61 aa). Residues 204–438 enclose the START domain; it reads AETDMSLLSE…LERMCERMAL (235 aa).

Belongs to the HD-ZIP homeobox family. Class IV subfamily. As to quaternary structure, interacts with ANT. In terms of tissue distribution, expressed in the embryo at early stage and in the endosperm.

Its subcellular location is the nucleus. Its function is as follows. Probable transcription factor. The protein is Homeobox-leucine zipper protein HDG8 of Arabidopsis thaliana (Mouse-ear cress).